A 420-amino-acid polypeptide reads, in one-letter code: Arginine biosynthesis bifunctional protein ArgJ (420 aa).

The substrate site is built by Thr167, Lys193, Thr204, Glu284, Asn415, and Thr420. Thr204 functions as the Nucleophile in the catalytic mechanism.

This sequence belongs to the ArgJ family. In terms of assembly, heterotetramer of two alpha and two beta chains.

It localises to the cytoplasm. It carries out the reaction N(2)-acetyl-L-ornithine + L-glutamate = N-acetyl-L-glutamate + L-ornithine. It catalyses the reaction L-glutamate + acetyl-CoA = N-acetyl-L-glutamate + CoA + H(+). It participates in amino-acid biosynthesis; L-arginine biosynthesis; L-ornithine and N-acetyl-L-glutamate from L-glutamate and N(2)-acetyl-L-ornithine (cyclic): step 1/1. Its pathway is amino-acid biosynthesis; L-arginine biosynthesis; N(2)-acetyl-L-ornithine from L-glutamate: step 1/4. In terms of biological role, catalyzes two activities which are involved in the cyclic version of arginine biosynthesis: the synthesis of N-acetylglutamate from glutamate and acetyl-CoA as the acetyl donor, and of ornithine by transacetylation between N(2)-acetylornithine and glutamate. In Prochlorococcus marinus (strain NATL2A), this protein is Arginine biosynthesis bifunctional protein ArgJ.